The following is a 183-amino-acid chain: Threonylcarbamoyl-AMP synthase (183 aa).

The region spanning 1 to 183 (MELAQIVERL…IFSRQIFRRG (183 aa)) is the YrdC-like domain.

This sequence belongs to the SUA5 family. TsaC subfamily.

It localises to the cytoplasm. It catalyses the reaction L-threonine + hydrogencarbonate + ATP = L-threonylcarbamoyladenylate + diphosphate + H2O. Its function is as follows. Required for the formation of a threonylcarbamoyl group on adenosine at position 37 (t(6)A37) in tRNAs that read codons beginning with adenine. Catalyzes the conversion of L-threonine, HCO(3)(-)/CO(2) and ATP to give threonylcarbamoyl-AMP (TC-AMP) as the acyladenylate intermediate, with the release of diphosphate. This chain is Threonylcarbamoyl-AMP synthase, found in Mannheimia succiniciproducens (strain KCTC 0769BP / MBEL55E).